Here is a 325-residue protein sequence, read N- to C-terminus: Methionyl-tRNA formyltransferase (325 aa).

Residue Ser113–Pro116 coordinates (6S)-5,6,7,8-tetrahydrofolate.

The protein belongs to the Fmt family.

The catalysed reaction is L-methionyl-tRNA(fMet) + (6R)-10-formyltetrahydrofolate = N-formyl-L-methionyl-tRNA(fMet) + (6S)-5,6,7,8-tetrahydrofolate + H(+). Its function is as follows. Attaches a formyl group to the free amino group of methionyl-tRNA(fMet). The formyl group appears to play a dual role in the initiator identity of N-formylmethionyl-tRNA by promoting its recognition by IF2 and preventing the misappropriation of this tRNA by the elongation apparatus. This Chromohalobacter salexigens (strain ATCC BAA-138 / DSM 3043 / CIP 106854 / NCIMB 13768 / 1H11) protein is Methionyl-tRNA formyltransferase.